The primary structure comprises 529 residues: V-set and immunoglobulin domain-containing protein 10 (529 aa).

The first 18 residues, 1-18 (MMITSAVVLYLLLLSHQT), serve as a signal peptide directing secretion. 2 consecutive Ig-like C2-type domains span residues 19-110 (VSEE…QTLS) and 129-217 (PATF…QELL). Topologically, residues 21-411 (EEQVQQFVIG…LNVKTSAGNG (391 aa)) are extracellular. 13 N-linked (GlcNAc...) asparagine glycosylation sites follow: N34, N35, N46, N135, N147, N159, N211, N269, N280, N284, N330, N357, and N376. C40 and C96 are joined by a disulfide. An intrachain disulfide couples C150 to C199. Positions 317–403 (PTGQPLATAL…GARELEVYLN (87 aa)) constitute an Ig-like C2-type 3 domain. An intrachain disulfide couples C335 to C387. Residues 412-432 (GAIVGIFVSVLVMMIGIVVGV) form a helical membrane-spanning segment. The Cytoplasmic portion of the chain corresponds to 433-529 (TVYTKRDRIC…PQRAELQPAV (97 aa)).

The protein resides in the membrane. This chain is V-set and immunoglobulin domain-containing protein 10 (vsig10), found in Danio rerio (Zebrafish).